Consider the following 546-residue polypeptide: Glucose-6-phosphate isomerase (546 aa).

Catalysis depends on E358, which acts as the Proton donor. Active-site residues include H389 and K504.

Belongs to the GPI family.

The protein localises to the cytoplasm. It carries out the reaction alpha-D-glucose 6-phosphate = beta-D-fructose 6-phosphate. It participates in carbohydrate biosynthesis; gluconeogenesis. Its pathway is carbohydrate degradation; glycolysis; D-glyceraldehyde 3-phosphate and glycerone phosphate from D-glucose: step 2/4. In terms of biological role, catalyzes the reversible isomerization of glucose-6-phosphate to fructose-6-phosphate. This chain is Glucose-6-phosphate isomerase, found in Desulfosudis oleivorans (strain DSM 6200 / JCM 39069 / Hxd3) (Desulfococcus oleovorans).